Reading from the N-terminus, the 298-residue chain is Ribosomal RNA small subunit methyltransferase H (298 aa).

S-adenosyl-L-methionine-binding positions include 35–37 (GGH), aspartate 55, phenylalanine 82, aspartate 100, and glutamine 107.

Belongs to the methyltransferase superfamily. RsmH family.

It localises to the cytoplasm. It catalyses the reaction cytidine(1402) in 16S rRNA + S-adenosyl-L-methionine = N(4)-methylcytidine(1402) in 16S rRNA + S-adenosyl-L-homocysteine + H(+). In terms of biological role, specifically methylates the N4 position of cytidine in position 1402 (C1402) of 16S rRNA. This chain is Ribosomal RNA small subunit methyltransferase H, found in Chlamydia abortus (strain DSM 27085 / S26/3) (Chlamydophila abortus).